The chain runs to 431 residues: Histidinol dehydrogenase 1 (431 aa).

3 residues coordinate NAD(+): Tyr-127, Gln-188, and Asn-211. Residues Ser-234, Gln-256, and His-259 each coordinate substrate. Zn(2+) is bound by residues Gln-256 and His-259. Catalysis depends on proton acceptor residues Glu-324 and His-325. Substrate contacts are provided by His-325, Asp-358, Glu-412, and His-417. A Zn(2+)-binding site is contributed by Asp-358. Residue His-417 participates in Zn(2+) binding.

It belongs to the histidinol dehydrogenase family. It depends on Zn(2+) as a cofactor.

It carries out the reaction L-histidinol + 2 NAD(+) + H2O = L-histidine + 2 NADH + 3 H(+). Its pathway is amino-acid biosynthesis; L-histidine biosynthesis; L-histidine from 5-phospho-alpha-D-ribose 1-diphosphate: step 9/9. Functionally, catalyzes the sequential NAD-dependent oxidations of L-histidinol to L-histidinaldehyde and then to L-histidine. The protein is Histidinol dehydrogenase 1 of Trichormus variabilis (strain ATCC 29413 / PCC 7937) (Anabaena variabilis).